Here is a 736-residue protein sequence, read N- to C-terminus: Ethylene receptor 2 (736 aa).

Helical transmembrane passes span 22 to 42, 53 to 73, and 94 to 114; these read ISDF…VYFV, VLVQ…INLW, and AAVS…LLSV. Cu cation is bound by residues Cys-64 and His-68. In terms of domain architecture, GAF spans 157 to 305; it reads DRHTILKTTL…VVADQVAVAL (149 aa). Residues 348 to 585 form the Histidine kinase domain; the sequence is VMNHEMRTPM…TAIFIVKLGI (238 aa). Phosphohistidine; by autocatalysis is present on His-351. In terms of domain architecture, Response regulatory spans 613-730; sequence KVLVMDDNGF…KMRSVLSGLL (118 aa). Asp-661 carries the post-translational modification 4-aspartylphosphate.

This sequence belongs to the ethylene receptor family. In terms of assembly, homodimer; disulfide-linked. Cu cation is required as a cofactor. Post-translationally, activation probably requires a transfer of a phosphate group between a His in the transmitter domain and an Asp of the receiver domain. Leaves, flowers and fruits.

It localises to the endoplasmic reticulum membrane. The enzyme catalyses ATP + protein L-histidine = ADP + protein N-phospho-L-histidine.. In terms of biological role, may act early in the ethylene signal transduction pathway, possibly as an ethylene receptor, or as a regulator of the pathway. This Solanum lycopersicum (Tomato) protein is Ethylene receptor 2 (ETR2).